We begin with the raw amino-acid sequence, 200 residues long: Ribonuclease HII (200 aa).

One can recognise an RNase H type-2 domain in the interval 14–200 (SRLAGVDEVG…FAPVKQWQLL (187 aa)). A divalent metal cation contacts are provided by Asp-20, Glu-21, and Asp-112.

This sequence belongs to the RNase HII family. Requires Mn(2+) as cofactor. It depends on Mg(2+) as a cofactor.

Its subcellular location is the cytoplasm. The catalysed reaction is Endonucleolytic cleavage to 5'-phosphomonoester.. Endonuclease that specifically degrades the RNA of RNA-DNA hybrids. This chain is Ribonuclease HII, found in Chromohalobacter salexigens (strain ATCC BAA-138 / DSM 3043 / CIP 106854 / NCIMB 13768 / 1H11).